A 435-amino-acid chain; its full sequence is D-amino acid dehydrogenase (435 aa).

3 to 17 (VLILGSGVIGTTSAW) serves as a coordination point for FAD.

It belongs to the DadA oxidoreductase family. Requires FAD as cofactor.

The enzyme catalyses a D-alpha-amino acid + A + H2O = a 2-oxocarboxylate + AH2 + NH4(+). The protein operates within amino-acid degradation; D-alanine degradation; NH(3) and pyruvate from D-alanine: step 1/1. Functionally, oxidative deamination of D-amino acids. This chain is D-amino acid dehydrogenase, found in Xylella fastidiosa (strain M12).